A 334-amino-acid chain; its full sequence is D-fructose 1,6-bisphosphatase class 2/sedoheptulose 1,7-bisphosphatase (334 aa).

Mn(2+) contacts are provided by D33, E57, D85, and E88. Residues 88–90 (EGT), Y119, 164–166 (RAR), and 186–188 (DGD) each bind substrate. A Mn(2+)-binding site is contributed by E213.

This sequence belongs to the FBPase class 2 family. In terms of assembly, homotetramer. The cofactor is Mn(2+).

The enzyme catalyses beta-D-fructose 1,6-bisphosphate + H2O = beta-D-fructose 6-phosphate + phosphate. It catalyses the reaction D-sedoheptulose 1,7-bisphosphate + H2O = D-sedoheptulose 7-phosphate + phosphate. It participates in carbohydrate biosynthesis; Calvin cycle. Catalyzes the hydrolysis of fructose 1,6-bisphosphate (Fru 1,6-P2) and sedoheptulose 1,7-bisphosphate (Sed 1,7-P2) to fructose 6-phosphate and sedoheptulose 7-phosphate, respectively. This is D-fructose 1,6-bisphosphatase class 2/sedoheptulose 1,7-bisphosphatase from Prochlorococcus marinus (strain MIT 9313).